A 314-amino-acid chain; its full sequence is DNA-directed RNA polymerase subunit alpha (314 aa).

The tract at residues 1–227 (MTTFEIECIE…ELLFPLKEIN (227 aa)) is alpha N-terminal domain (alpha-NTD). Residues 237–314 (IEDSKINQIL…LPKEKTSKSN (78 aa)) form an alpha C-terminal domain (alpha-CTD) region.

It belongs to the RNA polymerase alpha chain family. As to quaternary structure, in plastids the minimal PEP RNA polymerase catalytic core is composed of four subunits: alpha, beta, beta', and beta''. When a (nuclear-encoded) sigma factor is associated with the core the holoenzyme is formed, which can initiate transcription.

The protein resides in the plastid. Its subcellular location is the chloroplast. The enzyme catalyses RNA(n) + a ribonucleoside 5'-triphosphate = RNA(n+1) + diphosphate. Functionally, DNA-dependent RNA polymerase catalyzes the transcription of DNA into RNA using the four ribonucleoside triphosphates as substrates. The polypeptide is DNA-directed RNA polymerase subunit alpha (Pyrenomonas salina).